A 339-amino-acid chain; its full sequence is RNA 3'-terminal phosphate cyclase (339 aa).

Residues Asp109 and 286 to 290 (HLADQ) contribute to the ATP site. Residue His310 is the Tele-AMP-histidine intermediate of the active site.

This sequence belongs to the RNA 3'-terminal cyclase family. Type 1 subfamily.

Its subcellular location is the cytoplasm. It carries out the reaction a 3'-end 3'-phospho-ribonucleotide-RNA + ATP = a 3'-end 2',3'-cyclophospho-ribonucleotide-RNA + AMP + diphosphate. Its function is as follows. Catalyzes the conversion of 3'-phosphate to a 2',3'-cyclic phosphodiester at the end of RNA. The mechanism of action of the enzyme occurs in 3 steps: (A) adenylation of the enzyme by ATP; (B) transfer of adenylate to an RNA-N3'P to produce RNA-N3'PP5'A; (C) and attack of the adjacent 2'-hydroxyl on the 3'-phosphorus in the diester linkage to produce the cyclic end product. The biological role of this enzyme is unknown but it is likely to function in some aspects of cellular RNA processing. This Halobacterium salinarum (strain ATCC 29341 / DSM 671 / R1) protein is RNA 3'-terminal phosphate cyclase.